The sequence spans 171 residues: Spiderine-2b (171 aa).

Positions 1–18 (MKFALVLLGFCAFYLVNA) are cleaved as a signal peptide. Residues 19–58 (TGDLETELEASDLQELQEALDLIAETPLESLEAEELEEAR) constitute a propeptide, removed in mature form. Residues 59-104 (KFKFPKINWGKLASKAKDVYKKGQKLAKNKNVKKALKYGKQLAENL) are linear cationic cytotoxin domain. Positions 118–171 (NNKCWAIGTRCTDDCDCCPEHHCHCPAKSWTFGLIPCSCQVTESDKVNKCPPAE) constitute an Oxytoxin-type inhibitor cystine knot (ICK) domain. Intrachain disulfides connect Cys-121/Cys-135, Cys-128/Cys-140, Cys-132/Cys-167, Cys-134/Cys-156, and Cys-142/Cys-154.

The protein belongs to the spiderine family. Cationic/spiderine subfamily. As to expression, expressed by the venom gland.

It is found in the secreted. Has antimicrobial, insecticidal, cytolytic and cytotoxic activity. The polypeptide is Spiderine-2b (Oxyopes takobius (Lynx spider)).